A 171-amino-acid chain; its full sequence is AN1-type zinc finger protein 2A (171 aa).

AN1-type zinc fingers lie at residues 4–52 (PDLG…KKDV) and 94–142 (KVFT…SSAS). Zn(2+) is bound by residues C10, C15, C25, C28, C33, H36, H42, C44, C100, C105, C115, C118, C123, H126, H132, and C134. The disordered stretch occupies residues 134–171 (CQAGSSSASRGRTSTSRAAEQKPSGVSWLAQRLRRTVK). Positions 136 to 151 (AGSSSASRGRTSTSRA) are enriched in low complexity.

The protein localises to the cytoplasm. It is found in the nucleus. This is AN1-type zinc finger protein 2A (Zfand2a) from Mus musculus (Mouse).